Reading from the N-terminus, the 114-residue chain is UPF0145 protein SSO1976 (114 aa).

Belongs to the UPF0145 family.

The sequence is that of UPF0145 protein SSO1976 from Saccharolobus solfataricus (strain ATCC 35092 / DSM 1617 / JCM 11322 / P2) (Sulfolobus solfataricus).